The primary structure comprises 429 residues: Ribosomal RNA small subunit methyltransferase B (429 aa).

Residues 254–260 (CAAPGGK), Asp-277, Asp-303, and Asp-322 contribute to the S-adenosyl-L-methionine site. Cys-375 acts as the Nucleophile in catalysis. A disordered region spans residues 397–419 (ALSETGTPDQPGQQNLPGGEEGD). Positions 400–412 (ETGTPDQPGQQNL) are enriched in polar residues.

It belongs to the class I-like SAM-binding methyltransferase superfamily. RsmB/NOP family.

It localises to the cytoplasm. The enzyme catalyses cytidine(967) in 16S rRNA + S-adenosyl-L-methionine = 5-methylcytidine(967) in 16S rRNA + S-adenosyl-L-homocysteine + H(+). Specifically methylates the cytosine at position 967 (m5C967) of 16S rRNA. This chain is Ribosomal RNA small subunit methyltransferase B, found in Salmonella newport (strain SL254).